Consider the following 255-residue polypeptide: Imidazole glycerol phosphate synthase subunit HisF (255 aa).

Residues aspartate 11 and aspartate 130 contribute to the active site.

The protein belongs to the HisA/HisF family. In terms of assembly, heterodimer of HisH and HisF.

The protein resides in the cytoplasm. The enzyme catalyses 5-[(5-phospho-1-deoxy-D-ribulos-1-ylimino)methylamino]-1-(5-phospho-beta-D-ribosyl)imidazole-4-carboxamide + L-glutamine = D-erythro-1-(imidazol-4-yl)glycerol 3-phosphate + 5-amino-1-(5-phospho-beta-D-ribosyl)imidazole-4-carboxamide + L-glutamate + H(+). It functions in the pathway amino-acid biosynthesis; L-histidine biosynthesis; L-histidine from 5-phospho-alpha-D-ribose 1-diphosphate: step 5/9. In terms of biological role, IGPS catalyzes the conversion of PRFAR and glutamine to IGP, AICAR and glutamate. The HisF subunit catalyzes the cyclization activity that produces IGP and AICAR from PRFAR using the ammonia provided by the HisH subunit. In Rhodopseudomonas palustris (strain BisA53), this protein is Imidazole glycerol phosphate synthase subunit HisF.